Consider the following 330-residue polypeptide: Transcription factor zip1 (330 aa).

Basic and acidic residues predominate over residues S133–E148. 2 disordered regions span residues S133 to S165 and P238 to A277. A compositionally biased stretch (low complexity) spans K150 to S165. Over residues K244 to I262 the composition is skewed to polar residues. Residues T264–T327 enclose the bZIP domain. The basic motif stretch occupies residues K270–K288. Residues L292–L320 are leucine-zipper.

Belongs to the bZIP family. In terms of assembly, interacts with pof1.

The protein resides in the nucleus. Its function is as follows. Mediates cell growth arrest in response to cadmium exposure, which is essential to maintain cell viability. Regulates cadmium stress specific genes. This Schizosaccharomyces pombe (strain 972 / ATCC 24843) (Fission yeast) protein is Transcription factor zip1 (zip1).